The sequence spans 118 residues: MTNESEVGVKKAAELLRQGATMLEEACPICKMPLFKLKNGDVVCPVHGKVYIVKSDDEEKIVKRNLQLDEIESILIDGLYLSAKKMKEDPLDSERIVQIIRYLDALERLRKIKINSSE.

This sequence belongs to the UPF0148 family.

In Saccharolobus islandicus (strain M.16.27) (Sulfolobus islandicus), this protein is UPF0148 protein M1627_1409.